The primary structure comprises 441 residues: Glutamate-1-semialdehyde 2,1-aminomutase (441 aa).

Lysine 276 is modified (N6-(pyridoxal phosphate)lysine).

The protein belongs to the class-III pyridoxal-phosphate-dependent aminotransferase family. HemL subfamily. Homodimer. The cofactor is pyridoxal 5'-phosphate.

The protein resides in the cytoplasm. The enzyme catalyses (S)-4-amino-5-oxopentanoate = 5-aminolevulinate. Its pathway is porphyrin-containing compound metabolism; protoporphyrin-IX biosynthesis; 5-aminolevulinate from L-glutamyl-tRNA(Glu): step 2/2. This is Glutamate-1-semialdehyde 2,1-aminomutase from Rhodococcus jostii (strain RHA1).